The sequence spans 567 residues: Hydroxylamine reductase 2 (567 aa).

4 residues coordinate [4Fe-4S] cluster: cysteine 5, cysteine 8, cysteine 17, and cysteine 23. Residues histidine 262, glutamate 286, cysteine 330, cysteine 421, cysteine 449, cysteine 474, glutamate 509, and lysine 511 each contribute to the hybrid [4Fe-2O-2S] cluster site. Cysteine persulfide is present on cysteine 421.

This sequence belongs to the HCP family. It depends on [4Fe-4S] cluster as a cofactor. Requires hybrid [4Fe-2O-2S] cluster as cofactor.

It localises to the cytoplasm. The enzyme catalyses A + NH4(+) + H2O = hydroxylamine + AH2 + H(+). Functionally, catalyzes the reduction of hydroxylamine to form NH(3) and H(2)O. The chain is Hydroxylamine reductase 2 from Clostridium acetobutylicum (strain ATCC 824 / DSM 792 / JCM 1419 / IAM 19013 / LMG 5710 / NBRC 13948 / NRRL B-527 / VKM B-1787 / 2291 / W).